The sequence spans 645 residues: Ethylene response sensor 2 (645 aa).

Transmembrane regions (helical) follow at residues 5-25 (LLVQWLVFFFFFLIGSVVTAA), 54-74 (VGDFLIAIAYFSIPIELVYFV), 86-106 (VVCEFIAFIVLCGMTHLLAGF), and 125-145 (LTGIVSFLTALSLVTLLPLLL). The Cu cation site is built by C97 and H101. One can recognise a GAF domain in the interval 190–346 (DRHTILYTTL…VVADQVAVAI (157 aa)). A Histidine kinase domain is found at 389–623 (MMSDAMRCPV…VFRFQLRRSM (235 aa)).

Belongs to the ethylene receptor family. In terms of assembly, heteromer with ETR1. It depends on Cu cation as a cofactor. Autophosphorylated predominantly on Ser residues. Expressed in etiolated seedlings, leaves, roots and stems. Highly expressed in flowers, stamens, pollen cells, tapetum cells, carpels and ovules.

It localises to the endoplasmic reticulum membrane. In terms of biological role, ethylene receptor related to bacterial two-component regulators. Acts as a redundant negative regulator of ethylene signaling. This chain is Ethylene response sensor 2 (ERS2), found in Arabidopsis thaliana (Mouse-ear cress).